A 121-amino-acid chain; its full sequence is Phosphoribosyl-AMP cyclohydrolase (121 aa).

Position 76 (aspartate 76) interacts with Mg(2+). Position 77 (cysteine 77) interacts with Zn(2+). Mg(2+)-binding residues include aspartate 78 and aspartate 80. The Zn(2+) site is built by cysteine 93 and cysteine 100.

It belongs to the PRA-CH family. As to quaternary structure, homodimer. It depends on Mg(2+) as a cofactor. Zn(2+) serves as cofactor.

It localises to the cytoplasm. It catalyses the reaction 1-(5-phospho-beta-D-ribosyl)-5'-AMP + H2O = 1-(5-phospho-beta-D-ribosyl)-5-[(5-phospho-beta-D-ribosylamino)methylideneamino]imidazole-4-carboxamide. Its pathway is amino-acid biosynthesis; L-histidine biosynthesis; L-histidine from 5-phospho-alpha-D-ribose 1-diphosphate: step 3/9. Functionally, catalyzes the hydrolysis of the adenine ring of phosphoribosyl-AMP. This is Phosphoribosyl-AMP cyclohydrolase from Methanococcoides burtonii (strain DSM 6242 / NBRC 107633 / OCM 468 / ACE-M).